The primary structure comprises 191 residues: Holliday junction branch migration complex subunit RuvA (191 aa).

The tract at residues 1–64 is domain I; the sequence is MIGRITGTLA…EDAHLLYGFG (64 aa). Positions 65 to 138 are domain II; sequence SEVERAAFRE…KGKPVFAGAL (74 aa). Positions 138 to 141 are flexible linker; it reads LASV. The tract at residues 142–191 is domain III; that stretch reads PSAGASDDVRQALLALGYNERETAATVRELPAGLAVGEAIRQALRALSRA.

This sequence belongs to the RuvA family. In terms of assembly, homotetramer. Forms an RuvA(8)-RuvB(12)-Holliday junction (HJ) complex. HJ DNA is sandwiched between 2 RuvA tetramers; dsDNA enters through RuvA and exits via RuvB. An RuvB hexamer assembles on each DNA strand where it exits the tetramer. Each RuvB hexamer is contacted by two RuvA subunits (via domain III) on 2 adjacent RuvB subunits; this complex drives branch migration. In the full resolvosome a probable DNA-RuvA(4)-RuvB(12)-RuvC(2) complex forms which resolves the HJ.

The protein resides in the cytoplasm. The RuvA-RuvB-RuvC complex processes Holliday junction (HJ) DNA during genetic recombination and DNA repair, while the RuvA-RuvB complex plays an important role in the rescue of blocked DNA replication forks via replication fork reversal (RFR). RuvA specifically binds to HJ cruciform DNA, conferring on it an open structure. The RuvB hexamer acts as an ATP-dependent pump, pulling dsDNA into and through the RuvAB complex. HJ branch migration allows RuvC to scan DNA until it finds its consensus sequence, where it cleaves and resolves the cruciform DNA. The polypeptide is Holliday junction branch migration complex subunit RuvA (Thiobacillus denitrificans (strain ATCC 25259 / T1)).